A 219-amino-acid polypeptide reads, in one-letter code: NADH-quinone oxidoreductase subunit C (219 aa).

This sequence belongs to the complex I 30 kDa subunit family. In terms of assembly, NDH-1 is composed of 14 different subunits. Subunits NuoB, C, D, E, F, and G constitute the peripheral sector of the complex.

It is found in the cell inner membrane. It catalyses the reaction a quinone + NADH + 5 H(+)(in) = a quinol + NAD(+) + 4 H(+)(out). Functionally, NDH-1 shuttles electrons from NADH, via FMN and iron-sulfur (Fe-S) centers, to quinones in the respiratory chain. The immediate electron acceptor for the enzyme in this species is believed to be ubiquinone. Couples the redox reaction to proton translocation (for every two electrons transferred, four hydrogen ions are translocated across the cytoplasmic membrane), and thus conserves the redox energy in a proton gradient. In Methylorubrum populi (strain ATCC BAA-705 / NCIMB 13946 / BJ001) (Methylobacterium populi), this protein is NADH-quinone oxidoreductase subunit C.